The chain runs to 139 residues: Drosulfakinins (139 aa).

The signal sequence occupies residues 1 to 35; that stretch reads MGHRGMGCAHFATMAMPLWALTFYLLVVLPVPSQT. A propeptide spanning residues 36 to 71 is cleaved from the precursor; the sequence is ASVEVGKEERRLQDLDPKMGSEAGNTDGLSLARFGS. Residue Phe-80 is modified to Phenylalanine amide. Positions 81–109 are excised as a propeptide; it reads GHRVPIISRPVIPIELDLLMDNEDDRTMS. The residue at position 115 (Tyr-115) is a Sulfotyrosine. Phe-120 carries the post-translational modification Phenylalanine amide. The residue at position 132 (Tyr-132) is a Sulfotyrosine. Position 137 is a phenylalanine amide (Phe-137).

It belongs to the gastrin/cholecystokinin family.

The protein resides in the secreted. Its function is as follows. Drosulfakinin-0 (DSK 0) plays diverse biological roles including regulating gut muscle contraction in adults but not in larvae. The polypeptide is Drosulfakinins (Drosophila pseudoobscura pseudoobscura (Fruit fly)).